Here is a 284-residue protein sequence, read N- to C-terminus: GPN-loop GTPase 3 (284 aa).

A GTP-binding site is contributed by 13 to 18; that stretch reads GSGKST. The short motif at 72–74 is the Gly-Pro-Asn (GPN)-loop; involved in dimer interface element; the sequence is GPN. 174–177 is a binding site for GTP; that stretch reads TKMD. The tract at residues 261-284 is disordered; it reads KEPKEHEEESSSMFDEYFQERQNE.

This sequence belongs to the GPN-loop GTPase family. In terms of assembly, heterodimer with GPN1. Binds to RNA polymerase II (RNAPII). Interacts directly with subunits RPB4 and RPB7 and the CTD of RPB1.

Its function is as follows. Small GTPase required for proper localization of RNA polymerase II (RNAPII). May act at an RNAP assembly step prior to nuclear import. This Rattus norvegicus (Rat) protein is GPN-loop GTPase 3.